Reading from the N-terminus, the 119-residue chain is Fluoride-specific ion channel FluC (119 aa).

The next 4 helical transmembrane spans lie at 5–25, 30–50, 59–79, and 92–112; these read IIPL…LNLA, LSPA…IGIF, WKLL…GFSL, and SALA…WLGL. Na(+) contacts are provided by glycine 69 and threonine 72.

This sequence belongs to the fluoride channel Fluc/FEX (TC 1.A.43) family.

It is found in the cell inner membrane. The catalysed reaction is fluoride(in) = fluoride(out). Na(+) is not transported, but it plays an essential structural role and its presence is essential for fluoride channel function. Fluoride-specific ion channel. Important for reducing fluoride concentration in the cell, thus reducing its toxicity. The polypeptide is Fluoride-specific ion channel FluC (Neisseria meningitidis serogroup A / serotype 4A (strain DSM 15465 / Z2491)).